The sequence spans 67 residues: Large ribosomal subunit protein bL35 (67 aa).

Residues 1 to 16 (MPKMKTKSGAKKRFRV) show a composition bias toward basic residues. A disordered region spans residues 1 to 25 (MPKMKTKSGAKKRFRVRPGGTVKRG).

Belongs to the bacterial ribosomal protein bL35 family.

This Polaromonas sp. (strain JS666 / ATCC BAA-500) protein is Large ribosomal subunit protein bL35.